Reading from the N-terminus, the 175-residue chain is VQ motif-containing protein 25 (175 aa).

The VQ signature appears at 50–59 (FRELVQSLTG).

Its subcellular location is the nucleus. May function as negative regulator of plant defense. The chain is VQ motif-containing protein 25 from Arabidopsis thaliana (Mouse-ear cress).